Reading from the N-terminus, the 273-residue chain is Ribosomal RNA small subunit methyltransferase I (273 aa).

This sequence belongs to the methyltransferase superfamily. RsmI family.

Its subcellular location is the cytoplasm. The catalysed reaction is cytidine(1402) in 16S rRNA + S-adenosyl-L-methionine = 2'-O-methylcytidine(1402) in 16S rRNA + S-adenosyl-L-homocysteine + H(+). In terms of biological role, catalyzes the 2'-O-methylation of the ribose of cytidine 1402 (C1402) in 16S rRNA. In Xylella fastidiosa (strain 9a5c), this protein is Ribosomal RNA small subunit methyltransferase I.